The sequence spans 586 residues: Switch-associated protein 70 (586 aa).

One can recognise a PH domain in the interval 210-306 (DVLKQGYMLK…WIQAIQTTVS (97 aa)). Residues 316-538 (HKEARQKRKE…NNTRSWKDKV (223 aa)) are a coiled coil.

The SWAP complex consists of NPM1, NCL, PARP1 and SWAP70. Tyrosine-phosphorylated.

The protein resides in the cytoplasm. The protein localises to the cell membrane. It is found in the nucleus. Its subcellular location is the cell projection. It localises to the lamellipodium. Phosphatidylinositol 3,4,5-trisphosphate-dependent guanine nucleotide exchange factor (GEF) which, independently of RAS, transduces signals from tyrosine kinase receptors to RAC. It also mediates signaling of membrane ruffling. Regulates the actin cytoskeleton as an effector or adapter protein in response to agonist stimulated phosphatidylinositol (3,4)-bisphosphate production and cell protrusion. This is Switch-associated protein 70 (SWAP70) from Gallus gallus (Chicken).